Reading from the N-terminus, the 770-residue chain is DEAD-box ATP-dependent RNA helicase 24 (770 aa).

The segment at 1 to 106 is disordered; sequence MSKRPKLGGF…ADSDDEDDPV (106 aa). Over residues 14 to 26 the composition is skewed to polar residues; sequence RPTSYSFERSQPP. Acidic residues predominate over residues 34–43; it reads DDPDLDDIAF. A compositionally biased stretch (low complexity) spans 44–55; sequence SDDAAAPSDAPP. Residues 219–247 carry the Q motif motif; it reads KSFADCGFPVQLMNAIAKQGYEKPTTIQC. The region spanning 250–425 is the Helicase ATP-binding domain; the sequence is LPIVLSGRDI…REILTDPIRV (176 aa). 263-270 lines the ATP pocket; the sequence is AKTGSGKT. The DEAD box motif lies at 373-376; sequence DEAD. One can recognise a Helicase C-terminal domain in the interval 436–599; sequence DIKQVVNVLP…DVPNELMDLA (164 aa). Over residues 604–613 the composition is skewed to basic and acidic residues; it reads RFRANRDSRK. Disordered regions lie at residues 604 to 640, 683 to 704, and 729 to 770; these read RFRANRDSRKGGKKSGKGKGGGGGGGGGSGARGRGRG, VSASSSNTPSNSAPSRGAPSSF, and LPAP…GWDR. Residues 621–635 are compositionally biased toward gly residues; the sequence is GKGGGGGGGGGSGAR. Low complexity predominate over residues 683-697; sequence VSASSSNTPSNSAPS. Over residues 744-753 the composition is skewed to polar residues; the sequence is TVENANPNPE. Residues 754–770 show a composition bias toward basic and acidic residues; the sequence is SSRDRTRERKRPSGWDR.

It belongs to the DEAD box helicase family.

It carries out the reaction ATP + H2O = ADP + phosphate + H(+). The protein is DEAD-box ATP-dependent RNA helicase 24 of Oryza sativa subsp. japonica (Rice).